We begin with the raw amino-acid sequence, 193 residues long: MEIVFVSENENKIAEAREILLPLGFQSIFCGVTCRETGLTFTENAVLKAQAAVGSVKDVPIMADDSGICVDALNGMPGVLSSRWSQDGRNIDLLLWQMRDVPDVHRTAHFVCSIACVMPNTEVRTVSSVWHGRILHAPDGTGGFGYDPVFLPDGYSVSAAGLGSDLKNRISHRYKALRLMSSLLKRTYFSCHA.

7–12 (SENENK) provides a ligand contact to substrate. The active-site Proton acceptor is Asp-65. Residue Asp-65 coordinates Mg(2+). Residues Ser-66, 144–147 (FGYD), Lys-167, and 172–173 (HR) contribute to the substrate site.

It belongs to the HAM1 NTPase family. As to quaternary structure, homodimer. Requires Mg(2+) as cofactor.

The catalysed reaction is XTP + H2O = XMP + diphosphate + H(+). It carries out the reaction dITP + H2O = dIMP + diphosphate + H(+). It catalyses the reaction ITP + H2O = IMP + diphosphate + H(+). In terms of biological role, pyrophosphatase that catalyzes the hydrolysis of nucleoside triphosphates to their monophosphate derivatives, with a high preference for the non-canonical purine nucleotides XTP (xanthosine triphosphate), dITP (deoxyinosine triphosphate) and ITP. Seems to function as a house-cleaning enzyme that removes non-canonical purine nucleotides from the nucleotide pool, thus preventing their incorporation into DNA/RNA and avoiding chromosomal lesions. This chain is dITP/XTP pyrophosphatase, found in Tropheryma whipplei (strain Twist) (Whipple's bacillus).